The primary structure comprises 49 residues: Large ribosomal subunit protein bL33A (49 aa).

This sequence belongs to the bacterial ribosomal protein bL33 family.

The chain is Large ribosomal subunit protein bL33A from Bacillus cytotoxicus (strain DSM 22905 / CIP 110041 / 391-98 / NVH 391-98).